Consider the following 43-residue polypeptide: Large ribosomal subunit protein uL5 (43 aa).

Belongs to the universal ribosomal protein uL5 family. As to quaternary structure, part of the 50S ribosomal subunit; part of the 5S rRNA/L5/L18/L25 subcomplex. Contacts the 5S rRNA and the P site tRNA. Forms a bridge to the 30S subunit in the 70S ribosome.

Its function is as follows. This is one of the proteins that bind and probably mediate the attachment of the 5S RNA into the large ribosomal subunit, where it forms part of the central protuberance. In the 70S ribosome it contacts protein S13 of the 30S subunit (bridge B1b), connecting the 2 subunits; this bridge is implicated in subunit movement. Contacts the P site tRNA; the 5S rRNA and some of its associated proteins might help stabilize positioning of ribosome-bound tRNAs. This Proteus vulgaris protein is Large ribosomal subunit protein uL5 (rplE).